The sequence spans 200 residues: ATP-dependent Clp protease proteolytic subunit (200 aa).

Residue serine 103 is the Nucleophile of the active site. The active site involves histidine 128.

Belongs to the peptidase S14 family. In terms of assembly, fourteen ClpP subunits assemble into 2 heptameric rings which stack back to back to give a disk-like structure with a central cavity, resembling the structure of eukaryotic proteasomes.

Its subcellular location is the cytoplasm. The enzyme catalyses Hydrolysis of proteins to small peptides in the presence of ATP and magnesium. alpha-casein is the usual test substrate. In the absence of ATP, only oligopeptides shorter than five residues are hydrolyzed (such as succinyl-Leu-Tyr-|-NHMec, and Leu-Tyr-Leu-|-Tyr-Trp, in which cleavage of the -Tyr-|-Leu- and -Tyr-|-Trp bonds also occurs).. Its function is as follows. Cleaves peptides in various proteins in a process that requires ATP hydrolysis. Has a chymotrypsin-like activity. Plays a major role in the degradation of misfolded proteins. This chain is ATP-dependent Clp protease proteolytic subunit, found in Vibrio vulnificus (strain CMCP6).